The following is a 342-amino-acid chain: MDLRGTRITVHDMTLRDGMHPKRHLMTLEQMKTIAQGLDQAGIPLIEVTHGDGLGGSSVNYGFPAHTDEEYLGAVIPLMKQAKVSALLLPGIGTVDHLKMAHELGVNTIRVATHCTEADVSEQHISYARKLGMDTVGFLMMAHMNSPEGLVQQAKLMESYGANCIYVTDSAGHLLPDTVKARISAVRDALKPETELGFHGHHNLAMGVANSIAAIEAGATRIDAAAAGLGAGAGNTPMEVLIAVCDLMGIETGVDVFKIQDVAEDLVVPIMDFPIRIDRDALTLGYAGVYGSFLLFAKRAEKKYGVPAREILVEMGRRGMVGGQEDMIEDTAITLAKASAAA.

Positions 8–260 (ITVHDMTLRD…ETGVDVFKIQ (253 aa)) constitute a Pyruvate carboxyltransferase domain. Residue 16–17 (RD) coordinates substrate. Asp-17 provides a ligand contact to Mn(2+). Residue His-20 is the Proton acceptor of the active site. 2 residues coordinate substrate: Ser-170 and His-199. Positions 199 and 201 each coordinate Mn(2+). Tyr-290 contributes to the substrate binding site.

Belongs to the 4-hydroxy-2-oxovalerate aldolase family.

The enzyme catalyses (S)-4-hydroxy-2-oxopentanoate = acetaldehyde + pyruvate. The sequence is that of 4-hydroxy-2-oxovalerate aldolase 2 (mhpE) from Azoarcus sp. (strain BH72).